Here is a 338-residue protein sequence, read N- to C-terminus: Ketol-acid reductoisomerase (NADP(+)) (338 aa).

One can recognise a KARI N-terminal Rossmann domain in the interval 1 to 181 (MNVYYDKDCD…GGGRSGIIET (181 aa)). Residues 24 to 27 (YGSQ), R47, S50, S52, and 82 to 85 (DEFQ) each bind NADP(+). The active site involves H107. Residue G133 coordinates NADP(+). The KARI C-terminal knotted domain maps to 182–327 (TFKDETETDL…AKLRGMMPWI (146 aa)). Mg(2+) contacts are provided by D190, E194, E226, and E230. S251 contacts substrate.

Belongs to the ketol-acid reductoisomerase family. Requires Mg(2+) as cofactor.

The enzyme catalyses (2R)-2,3-dihydroxy-3-methylbutanoate + NADP(+) = (2S)-2-acetolactate + NADPH + H(+). It catalyses the reaction (2R,3R)-2,3-dihydroxy-3-methylpentanoate + NADP(+) = (S)-2-ethyl-2-hydroxy-3-oxobutanoate + NADPH + H(+). It participates in amino-acid biosynthesis; L-isoleucine biosynthesis; L-isoleucine from 2-oxobutanoate: step 2/4. The protein operates within amino-acid biosynthesis; L-valine biosynthesis; L-valine from pyruvate: step 2/4. In terms of biological role, involved in the biosynthesis of branched-chain amino acids (BCAA). Catalyzes an alkyl-migration followed by a ketol-acid reduction of (S)-2-acetolactate (S2AL) to yield (R)-2,3-dihydroxy-isovalerate. In the isomerase reaction, S2AL is rearranged via a Mg-dependent methyl migration to produce 3-hydroxy-3-methyl-2-ketobutyrate (HMKB). In the reductase reaction, this 2-ketoacid undergoes a metal-dependent reduction by NADPH to yield (R)-2,3-dihydroxy-isovalerate. The polypeptide is Ketol-acid reductoisomerase (NADP(+)) (Psychrobacter arcticus (strain DSM 17307 / VKM B-2377 / 273-4)).